The following is a 280-amino-acid chain: Octanoyl-[GcvH]:protein N-octanoyltransferase (280 aa).

One can recognise a BPL/LPL catalytic domain in the interval 40–245 (QERGAVLRAW…VLSTVSLLQN (206 aa)). The active-site Acyl-thioester intermediate is the Cys-144.

Belongs to the octanoyltransferase LipL family.

The catalysed reaction is N(6)-octanoyl-L-lysyl-[glycine-cleavage complex H protein] + L-lysyl-[lipoyl-carrier protein] = N(6)-octanoyl-L-lysyl-[lipoyl-carrier protein] + L-lysyl-[glycine-cleavage complex H protein]. Its pathway is protein modification; protein lipoylation via endogenous pathway; protein N(6)-(lipoyl)lysine from octanoyl-[acyl-carrier-protein]. Catalyzes the amidotransfer (transamidation) of the octanoyl moiety from octanoyl-GcvH to the lipoyl domain of the E2 subunit of lipoate-dependent enzymes. This chain is Octanoyl-[GcvH]:protein N-octanoyltransferase, found in Exiguobacterium sp. (strain ATCC BAA-1283 / AT1b).